Reading from the N-terminus, the 730-residue chain is Rap1 GTPase-activating protein 2 (730 aa).

The Rap-GAP domain maps to 247 to 463; it reads IVAYDEHEVN…RTRAALLDNL (217 aa). Disordered stretches follow at residues 510–668 and 698–730; these read MVGS…STAS and SRSPTDIKNRNSPRSNLKFRFDKLSHGSSSTSH. Composition is skewed to polar residues over residues 535 to 557 and 597 to 612; these read GEVTKTTFSPPVSAATAKNQSRS and HSSQEMKSETSSNPSS. Basic and acidic residues predominate over residues 617–630; it reads PNKDRPFVKLKENG. The span at 631–651 shows a compositional bias: low complexity; sequence RSNISRSSSSTSSFSSTAGES. Over residues 699–712 the composition is skewed to polar residues; it reads RSPTDIKNRNSPRS.

It is found in the cytoplasm. In terms of biological role, GTPase activator for the nuclear Ras-related regulatory protein RAP-1A (KREV-1), converting it to the putatively inactive GDP-bound state. The chain is Rap1 GTPase-activating protein 2 (RAP1GAP2) from Gallus gallus (Chicken).